The primary structure comprises 275 residues: Large ribosomal subunit protein uL2 (275 aa).

Disordered regions lie at residues 28–59 (KPYA…GGHK) and 224–275 (AMNP…RHKR). Polar residues predominate over residues 35-46 (DTQSSTAGRNNN). Positions 50-59 (TTRHKGGGHK) are enriched in basic residues.

The protein belongs to the universal ribosomal protein uL2 family. As to quaternary structure, part of the 50S ribosomal subunit. Forms a bridge to the 30S subunit in the 70S ribosome.

In terms of biological role, one of the primary rRNA binding proteins. Required for association of the 30S and 50S subunits to form the 70S ribosome, for tRNA binding and peptide bond formation. It has been suggested to have peptidyltransferase activity; this is somewhat controversial. Makes several contacts with the 16S rRNA in the 70S ribosome. In Paraburkholderia phymatum (strain DSM 17167 / CIP 108236 / LMG 21445 / STM815) (Burkholderia phymatum), this protein is Large ribosomal subunit protein uL2.